The sequence spans 358 residues: Small ribosomal subunit biogenesis GTPase RsgA 2 (358 aa).

Residues 106–261 (AEQLIAANVD…LIDTPGMREI (156 aa)) enclose the CP-type G domain. Residues 151–154 (SKAD) and 203–211 (GSSGVGKST) each bind GTP. Residues cysteine 284, cysteine 289, histidine 291, and cysteine 297 each contribute to the Zn(2+) site.

Belongs to the TRAFAC class YlqF/YawG GTPase family. RsgA subfamily. In terms of assembly, monomer. Associates with 30S ribosomal subunit, binds 16S rRNA. The cofactor is Zn(2+).

The protein resides in the cytoplasm. In terms of biological role, one of several proteins that assist in the late maturation steps of the functional core of the 30S ribosomal subunit. Helps release RbfA from mature subunits. May play a role in the assembly of ribosomal proteins into the subunit. Circularly permuted GTPase that catalyzes slow GTP hydrolysis, GTPase activity is stimulated by the 30S ribosomal subunit. The protein is Small ribosomal subunit biogenesis GTPase RsgA 2 of Vibrio parahaemolyticus serotype O3:K6 (strain RIMD 2210633).